A 153-amino-acid polypeptide reads, in one-letter code: NAD(P)H-quinone oxidoreductase subunit N (153 aa).

It belongs to the complex I NdhN subunit family. As to quaternary structure, NDH-1 can be composed of about 15 different subunits; different subcomplexes with different compositions have been identified which probably have different functions.

The protein resides in the cellular thylakoid membrane. The enzyme catalyses a plastoquinone + NADH + (n+1) H(+)(in) = a plastoquinol + NAD(+) + n H(+)(out). The catalysed reaction is a plastoquinone + NADPH + (n+1) H(+)(in) = a plastoquinol + NADP(+) + n H(+)(out). Its function is as follows. NDH-1 shuttles electrons from an unknown electron donor, via FMN and iron-sulfur (Fe-S) centers, to quinones in the respiratory and/or the photosynthetic chain. The immediate electron acceptor for the enzyme in this species is believed to be plastoquinone. Couples the redox reaction to proton translocation, and thus conserves the redox energy in a proton gradient. Cyanobacterial NDH-1 also plays a role in inorganic carbon-concentration. This chain is NAD(P)H-quinone oxidoreductase subunit N, found in Parasynechococcus marenigrum (strain WH8102).